The primary structure comprises 589 residues: L-fucose isomerase (589 aa).

Residues Glu-340 and Asp-364 each act as proton acceptor in the active site. Mn(2+) contacts are provided by Glu-340, Asp-364, and His-527.

Belongs to the L-fucose isomerase family. Mn(2+) is required as a cofactor.

The protein localises to the cytoplasm. It carries out the reaction L-fucose = L-fuculose. Its pathway is carbohydrate degradation; L-fucose degradation; L-lactaldehyde and glycerone phosphate from L-fucose: step 1/3. In terms of biological role, converts the aldose L-fucose into the corresponding ketose L-fuculose. In Haemophilus influenzae (strain PittEE), this protein is L-fucose isomerase.